We begin with the raw amino-acid sequence, 222 residues long: UPF0441 protein CKO_04429 (222 aa).

Residues Thr177 to Thr194 show a composition bias toward low complexity. Residues Thr177–Gly222 form a disordered region. The span at Ala203–Gly222 shows a compositional bias: polar residues.

Belongs to the UPF0441 family.

The polypeptide is UPF0441 protein CKO_04429 (Citrobacter koseri (strain ATCC BAA-895 / CDC 4225-83 / SGSC4696)).